The chain runs to 83 residues: Arminin 4364 (83 aa).

The signal sequence occupies residues 1-18 (MKTVFAILFLAFIALTYA). A propeptide spanning residues 19–55 (RSYEDVKEEIKNEVEKEILEDLEKETDELNERKINDA) is cleaved from the precursor. V80 is subject to Valine amide.

This sequence belongs to the arminin family. As to expression, expressed in entodermal epithelium along the body column.

It localises to the secreted. The protein localises to the target cell membrane. Functionally, antimicrobial peptide with a broad-spectrum antimicrobial activity. Keeps its antibacterial activity under a wide range of salt concentrations that mimic physiological conditions of human blood, which is surprising, since Hydra is an obligate freshwater animal with nearly no salt tolerance. Does not affect red blood cells. The sequence is that of Arminin 4364 from Hydra vulgaris (Hydra).